Here is a 217-residue protein sequence, read N- to C-terminus: uncharacterized protein (217 aa).

This is an uncharacterized protein from Homo sapiens (Human).